We begin with the raw amino-acid sequence, 381 residues long: MSLNMFWFLPTHGDGHYLGTEEGSRPVDHGYLQQIAQAADRLGYTGVLIPTGRSCEDAWLVAASMIPVTQRLKFLVALRPSVTSPTVAARQAATLDRLSNGRALFNLVTGSDPQELAGDGVFLDHSERYEASAEFTQVWRRLLLGETVDFNGKHIHVRGAKLLFPPIQQPYPPLYFGGSSDVAQELAAEQVDLYLTWGEPPELVKEKIEQVRAKAAAHGRKIRFGVRLHVIVRETNDEAWQAAERLISHLDDETIAKAQAAFARTDSVGQQRMAALHNGKRDNLEISPNLWAGVGLVRGGAGTALVGDGPTVAARINEYAALGIDSFVLSGYPHLEEAYRVGELLFPHLDVAIPEIPQPQPLNPQGEAVANDFIPRNVAQS.

Belongs to the SsuD family. As to quaternary structure, homotetramer.

It catalyses the reaction an alkanesulfonate + FMNH2 + O2 = an aldehyde + FMN + sulfite + H2O + 2 H(+). In terms of biological role, catalyzes the desulfonation of aliphatic sulfonates. This Escherichia coli O81 (strain ED1a) protein is Alkanesulfonate monooxygenase.